The sequence spans 225 residues: Uracil-DNA glycosylase 1 (225 aa).

Catalysis depends on aspartate 68, which acts as the Proton acceptor.

The protein belongs to the uracil-DNA glycosylase (UDG) superfamily. UNG family.

It is found in the cytoplasm. The enzyme catalyses Hydrolyzes single-stranded DNA or mismatched double-stranded DNA and polynucleotides, releasing free uracil.. Functionally, excises uracil residues from the DNA which can arise as a result of misincorporation of dUMP residues by DNA polymerase or due to deamination of cytosine. The sequence is that of Uracil-DNA glycosylase 1 (ung1) from Streptomyces coelicolor (strain ATCC BAA-471 / A3(2) / M145).